The primary structure comprises 290 residues: Acetylglutamate kinase (290 aa).

Residues 60–61 (GG), Arg-82, and Asn-185 each bind substrate.

Belongs to the acetylglutamate kinase family. ArgB subfamily.

It localises to the cytoplasm. The catalysed reaction is N-acetyl-L-glutamate + ATP = N-acetyl-L-glutamyl 5-phosphate + ADP. The protein operates within amino-acid biosynthesis; L-arginine biosynthesis; N(2)-acetyl-L-ornithine from L-glutamate: step 2/4. In terms of biological role, catalyzes the ATP-dependent phosphorylation of N-acetyl-L-glutamate. The sequence is that of Acetylglutamate kinase from Archaeoglobus fulgidus (strain ATCC 49558 / DSM 4304 / JCM 9628 / NBRC 100126 / VC-16).